Consider the following 295-residue polypeptide: 4-hydroxy-tetrahydrodipicolinate synthase (295 aa).

Residue Thr48 participates in pyruvate binding. The active-site Proton donor/acceptor is the Tyr135. Lys163 acts as the Schiff-base intermediate with substrate in catalysis. Val204 contacts pyruvate.

This sequence belongs to the DapA family. In terms of assembly, homotetramer; dimer of dimers.

It is found in the cytoplasm. The catalysed reaction is L-aspartate 4-semialdehyde + pyruvate = (2S,4S)-4-hydroxy-2,3,4,5-tetrahydrodipicolinate + H2O + H(+). It functions in the pathway amino-acid biosynthesis; L-lysine biosynthesis via DAP pathway; (S)-tetrahydrodipicolinate from L-aspartate: step 3/4. Catalyzes the condensation of (S)-aspartate-beta-semialdehyde [(S)-ASA] and pyruvate to 4-hydroxy-tetrahydrodipicolinate (HTPA). In Francisella philomiragia subsp. philomiragia (strain ATCC 25017 / CCUG 19701 / FSC 153 / O#319-036), this protein is 4-hydroxy-tetrahydrodipicolinate synthase.